A 352-amino-acid polypeptide reads, in one-letter code: MGNFGRVPVGIVGASGYGGVQLVRLLMDHPEIELVYLGGESSVGKSFASLYPHLAHAVKLSIEEVDPEVIARRCEVVFLSMPNGLACQIVPTLLEKGCKVLDLSADYRFRNLTTYTTWYGVERSDRTTADTAIYGLPELYRDRISEAQLVGCPGSYPTASLLALSPLLKQGLIVPETAIVDAKSGTSGGGREAKTYLLLAEADNSLAPYSVVRHRHTPEIEQICSDLAGHEVTVQFTPHLVPIVRGILATVYATLRDPGLVGDDLTTIYTAFYRNSPWVKVCESGIYPQTKWAAGSNLCYIGVEVDPRTGRVIGMSVIDNLIKGQAGQAIQCLNIMMGWDETLGLPKMGFYP.

The protein belongs to the NAGSA dehydrogenase family. Type 1 subfamily.

It is found in the cytoplasm. It catalyses the reaction N-acetyl-L-glutamate 5-semialdehyde + phosphate + NADP(+) = N-acetyl-L-glutamyl 5-phosphate + NADPH + H(+). It functions in the pathway amino-acid biosynthesis; L-arginine biosynthesis; N(2)-acetyl-L-ornithine from L-glutamate: step 3/4. Catalyzes the NADPH-dependent reduction of N-acetyl-5-glutamyl phosphate to yield N-acetyl-L-glutamate 5-semialdehyde. The sequence is that of N-acetyl-gamma-glutamyl-phosphate reductase from Nostoc ellipsosporum.